Reading from the N-terminus, the 900-residue chain is Alanine--tRNA ligase (900 aa).

Histidine 604, histidine 608, cysteine 708, and histidine 712 together coordinate Zn(2+).

The protein belongs to the class-II aminoacyl-tRNA synthetase family. Zn(2+) is required as a cofactor.

It is found in the cytoplasm. It carries out the reaction tRNA(Ala) + L-alanine + ATP = L-alanyl-tRNA(Ala) + AMP + diphosphate. In terms of biological role, catalyzes the attachment of alanine to tRNA(Ala) in a two-step reaction: alanine is first activated by ATP to form Ala-AMP and then transferred to the acceptor end of tRNA(Ala). Also edits incorrectly charged Ser-tRNA(Ala) and Gly-tRNA(Ala) via its editing domain. This chain is Alanine--tRNA ligase, found in Saccharolobus islandicus (strain M.14.25 / Kamchatka #1) (Sulfolobus islandicus).